Here is a 497-residue protein sequence, read N- to C-terminus: E3 ubiquitin-protein ligase CBL-C (497 aa).

Residues 7–145 form a 4H region; sequence PQGWQWGEPR…SALFPEGKYC (139 aa). One can recognise a Cbl-PTB domain in the interval 7–321; it reads PQGWQWGEPR…GKNHNPDLTE (315 aa). The segment at 146 to 218 is EF-hand-like; sequence GHLYQITKGS…FEFDIFTRLF (73 aa). Ca(2+) contacts are provided by Asp-199, Thr-201, and Glu-210. An SH2-like region spans residues 219 to 321; it reads QPWPTLLKNW…GKNHNPDLTE (103 aa). Residue Arg-264 coordinates 4-O-phospho-L-tyrosine. The interval 322 to 350 is linker; sequence LCRAVLNQCIQVSQEQLQLYQAMNSTFEL. Tyr-341 bears the Phosphotyrosine; by SRC mark. The RING-type zinc-finger motif lies at 351-390; that stretch reads CKICTERDKDVRIEPCGHLLCSCCLAAWQHSDSQTCPFCR. The tract at residues 351-497 is interaction with RET; the sequence is CKICTERDKD…QVREGATESS (147 aa).

As to quaternary structure, interacts with Ubiquitin-conjugating enzyme E2 UBE2D2 and UBE2D3. Interacts with EGFR (tyrosine phosphorylated). Interacts with the SH3 domain proteins LYN and CRK. Interacts (via RING-type zinc finger) with TGFB1I1 (via LIM zinc-binding domain 2); the interaction is direct and enhances the E3 activity. Interacts directly with RET (inactive) and CD2AP; dissociates from RET upon RET activation by GDNF which also increases the interaction with CD2AP suggesting dissociation as CBLC:CD2AP complex. Interacts with SRC; the interaction is enhanced when SRC is phosphorylated at 'Tyr-419'. Phosphorylated on multiple tyrosine residues by SRC. Post-translationally, autoubiquitinated, when phosphorylated at Tyr-341.

The enzyme catalyses S-ubiquitinyl-[E2 ubiquitin-conjugating enzyme]-L-cysteine + [acceptor protein]-L-lysine = [E2 ubiquitin-conjugating enzyme]-L-cysteine + N(6)-ubiquitinyl-[acceptor protein]-L-lysine.. Its activity is regulated as follows. Phosphorylation at Tyr-341 is necessary and sufficient for the activation of E3 activity. Acts as an E3 ubiquitin-protein ligase, which accepts ubiquitin from specific E2 ubiquitin-conjugating enzymes, and then transfers it to substrates promoting their degradation by the proteasome. Functionally coupled with the E2 ubiquitin-protein ligases UB2D1, UB2D2 and UB2D3. Regulator of EGFR mediated signal transduction; upon EGF activation, ubiquitinates EGFR. Inhibits EGF stimulated MAPK1 activation. Promotes ubiquitination of SRC phosphorylated at 'Tyr-419', has the highest ubiquitin ligase activity among CBL family proteins. In collaboration with CD2AP may act as regulatory checkpoint for Ret signaling by modulating the rate of RET degradation after ligand activation; CD2AP converts it from an inhibitor to a promoter of RET degradation; the function limits the potency of GDNF on neuronal survival. The polypeptide is E3 ubiquitin-protein ligase CBL-C (Cblc) (Rattus norvegicus (Rat)).